The chain runs to 309 residues: Protein FdhE homolog (309 aa).

Belongs to the FdhE family.

The protein localises to the cytoplasm. In terms of biological role, necessary for formate dehydrogenase activity. This is Protein FdhE homolog from Serratia proteamaculans (strain 568).